A 389-amino-acid chain; its full sequence is Chalcone synthase E (389 aa).

Residue cysteine 164 is part of the active site.

It belongs to the thiolase-like superfamily. Chalcone/stilbene synthases family.

It carries out the reaction (E)-4-coumaroyl-CoA + 3 malonyl-CoA + 3 H(+) = 2',4,4',6'-tetrahydroxychalcone + 3 CO2 + 4 CoA. The protein operates within secondary metabolite biosynthesis; flavonoid biosynthesis. Its function is as follows. The primary product of this enzyme is 4,2',4',6'-tetrahydroxychalcone (also termed naringenin-chalcone or chalcone) which can under specific conditions spontaneously isomerize into naringenin. The sequence is that of Chalcone synthase E (CHSE) from Ipomoea purpurea (Common morning glory).